A 426-amino-acid polypeptide reads, in one-letter code: Glutamate-1-semialdehyde 2,1-aminomutase (426 aa).

At Lys-265 the chain carries N6-(pyridoxal phosphate)lysine.

It belongs to the class-III pyridoxal-phosphate-dependent aminotransferase family. HemL subfamily. As to quaternary structure, homodimer. Pyridoxal 5'-phosphate serves as cofactor.

The protein localises to the cytoplasm. It catalyses the reaction (S)-4-amino-5-oxopentanoate = 5-aminolevulinate. The protein operates within porphyrin-containing compound metabolism; protoporphyrin-IX biosynthesis; 5-aminolevulinate from L-glutamyl-tRNA(Glu): step 2/2. The chain is Glutamate-1-semialdehyde 2,1-aminomutase from Pectobacterium carotovorum subsp. carotovorum (strain PC1).